A 379-amino-acid polypeptide reads, in one-letter code: tRNA-specific 2-thiouridylase MnmA (379 aa).

ATP-binding positions include 23 to 30 and Leu-49; that span reads AMSGGVDS. Residue Cys-117 is the Nucleophile of the active site. An intrachain disulfide couples Cys-117 to Cys-214. Gly-141 lines the ATP pocket. An interaction with tRNA region spans residues 163–165; the sequence is RDQ. The Cysteine persulfide intermediate role is filled by Cys-214.

This sequence belongs to the MnmA/TRMU family.

It localises to the cytoplasm. It catalyses the reaction S-sulfanyl-L-cysteinyl-[protein] + uridine(34) in tRNA + AH2 + ATP = 2-thiouridine(34) in tRNA + L-cysteinyl-[protein] + A + AMP + diphosphate + H(+). Catalyzes the 2-thiolation of uridine at the wobble position (U34) of tRNA, leading to the formation of s(2)U34. The protein is tRNA-specific 2-thiouridylase MnmA of Cereibacter sphaeroides (strain ATCC 17029 / ATH 2.4.9) (Rhodobacter sphaeroides).